Reading from the N-terminus, the 465-residue chain is ATP-sulfurylase 3, chloroplastic (465 aa).

The N-terminal 49 residues, 1–49, are a transit peptide targeting the chloroplast; it reads MASMSTVFPKPTSFISQPLTKSHKSDSVTTSISFPSNSKTRSLRTISVR.

It belongs to the sulfate adenylyltransferase family. In terms of assembly, homotetramer.

The protein resides in the plastid. The protein localises to the chloroplast stroma. It catalyses the reaction sulfate + ATP + H(+) = adenosine 5'-phosphosulfate + diphosphate. It participates in sulfur metabolism; hydrogen sulfide biosynthesis; sulfite from sulfate: step 1/3. This Arabidopsis thaliana (Mouse-ear cress) protein is ATP-sulfurylase 3, chloroplastic (APS3).